The sequence spans 526 residues: Protein spinster homolog 1 (526 aa).

The segment at 1-44 (MTSRRSHGDVTPFLTQADNTEEEGVRDPESQSSDEEEEEGKDHG) is disordered. The next 12 membrane-spanning stretches (helical) occupy residues 59-79 (VIIV…RFTV), 98-118 (GLVQ…FGYL), 126-146 (LIMC…SFVS), 159-179 (LVGV…ADLF), 187-207 (MLSF…IVGS), 218-238 (WALR…IFVA), 272-292 (FILS…LALW), 321-341 (MIFG…GVEI), 355-375 (LVCA…LAFA), 384-404 (VFIF…ADIL), 419-439 (LQIV…IGVI), and 463-483 (MICA…ALFI).

This sequence belongs to the major facilitator superfamily. Spinster (TC 2.A.1.49) family.

It localises to the lysosome membrane. It carries out the reaction a 1-acyl-sn-glycero-3-phosphocholine(out) + H(+)(out) = a 1-acyl-sn-glycero-3-phosphocholine(in) + H(+)(in). The enzyme catalyses a 1-acyl-sn-glycero-3-phosphoethanolamine(out) + H(+)(out) = a 1-acyl-sn-glycero-3-phosphoethanolamine(in) + H(+)(in). The catalysed reaction is a 1-O-(1Z-alkenyl)-sn-glycero-3-phosphocholine(out) + H(+)(out) = a 1-O-(1Z-alkenyl)-sn-glycero-3-phosphocholine(in) + H(+)(in). It catalyses the reaction a 1-O-(1Z-alkenyl)-sn-glycero-3-phosphoethanolamine(out) + H(+)(out) = a 1-O-(1Z-alkenyl)-sn-glycero-3-phosphoethanolamine(in) + H(+)(in). In terms of biological role, mediates the rate-limiting, proton-dependent, lysosomal efflux of lysophospholipids. Selective for zwitterionic headgroups such as lysophosphatidylcholine (LPC) and lysophosphatidylethanolamine (LPE). Essential player in lysosomal homeostasis. This chain is Protein spinster homolog 1 (spns1), found in Xenopus laevis (African clawed frog).